Reading from the N-terminus, the 290-residue chain is Small ribosomal subunit protein uS2 (290 aa).

This sequence belongs to the universal ribosomal protein uS2 family. In terms of assembly, component of the small ribosomal subunit. Mature ribosomes consist of a small (40S) and a large (60S) subunit. The 40S subunit contains about 33 different proteins and 1 molecule of RNA (18S). The 60S subunit contains about 49 different proteins and 3 molecules of RNA (28S, 5.8S and 5S). Interacts with ribosomal protein S21.

It is found in the cytoplasm. Its function is as follows. Required for the assembly and/or stability of the 40S ribosomal subunit. Required for the processing of the 20S rRNA-precursor to mature 18S rRNA in a late step of the maturation of 40S ribosomal subunits. This Culex quinquefasciatus (Southern house mosquito) protein is Small ribosomal subunit protein uS2.